The sequence spans 339 residues: Phenylalanine--tRNA ligase alpha subunit (339 aa).

E254 is a Mg(2+) binding site.

It belongs to the class-II aminoacyl-tRNA synthetase family. Phe-tRNA synthetase alpha subunit type 1 subfamily. Tetramer of two alpha and two beta subunits. Requires Mg(2+) as cofactor.

The protein localises to the cytoplasm. It carries out the reaction tRNA(Phe) + L-phenylalanine + ATP = L-phenylalanyl-tRNA(Phe) + AMP + diphosphate + H(+). This is Phenylalanine--tRNA ligase alpha subunit from Clostridium tetani (strain Massachusetts / E88).